The sequence spans 820 residues: Protein O-mannosyl-transferase 2 (820 aa).

Residues 124–144 (AAGWWATLAVVTLLSFATRFH) traverse the membrane as a helical segment. Asn168 is a glycosylation site (N-linked (GlcNAc...) asparagine). A run of 5 helical transmembrane segments spans residues 170–190 (TFFF…AGYL), 216–236 (GFCA…VLDL), 261–281 (QYIL…LSMV), 301–321 (LTGI…FIIV), and 353–373 (ILCL…VHVM). N-linked (GlcNAc...) asparagine glycosylation is found at Asn376 and Asn400. 3 consecutive MIR domains span residues 404 to 460 (PEHL…IKKY), 473 to 529 (VEFV…IEVV), and 534 to 591 (GNRI…IEEH). Asn515 carries N-linked (GlcNAc...) asparagine glycosylation. 2 N-linked (GlcNAc...) asparagine glycosylation sites follow: Asn598 and Asn653. Helical transmembrane passes span 659–679 (VYLL…VLYL), 713–733 (LLLG…ILYF), 735–755 (HYFP…DTLL), and 774–794 (VGIL…HPLA).

It belongs to the glycosyltransferase 39 family. In terms of processing, N-glycosylated. Ubiquitous. Highly expressed in the acrosome of cap phase spermatids, in spermatocytes and liver. Isoform 1 seems to be testis-specific.

The protein resides in the endoplasmic reticulum membrane. It catalyses the reaction a di-trans,poly-cis-dolichyl beta-D-mannosyl phosphate + L-seryl-[protein] = 3-O-(alpha-D-mannosyl)-L-seryl-[protein] + a di-trans,poly-cis-dolichyl phosphate + H(+). It carries out the reaction a di-trans,poly-cis-dolichyl beta-D-mannosyl phosphate + L-threonyl-[protein] = 3-O-(alpha-D-mannosyl)-L-threonyl-[protein] + a di-trans,poly-cis-dolichyl phosphate + H(+). The protein operates within protein modification; protein glycosylation. Functionally, transfers mannosyl residues to the hydroxyl group of serine or threonine residues. Coexpression of both POMT1 and POMT2 is necessary for enzyme activity, expression of either POMT1 or POMT2 alone is insufficient. Essentially dedicated to O-mannosylation of alpha-DAG1 and few other proteins but not of cadherins and protocaherins. This Mus musculus (Mouse) protein is Protein O-mannosyl-transferase 2 (Pomt2).